The primary structure comprises 316 residues: Pantothenate kinase (316 aa).

Residue glycine 95 to serine 102 coordinates ATP.

Belongs to the prokaryotic pantothenate kinase family.

It localises to the cytoplasm. It carries out the reaction (R)-pantothenate + ATP = (R)-4'-phosphopantothenate + ADP + H(+). The protein operates within cofactor biosynthesis; coenzyme A biosynthesis; CoA from (R)-pantothenate: step 1/5. The polypeptide is Pantothenate kinase (Shigella dysenteriae serotype 1 (strain Sd197)).